A 352-amino-acid chain; its full sequence is C-C chemokine receptor type 5 (352 aa).

The Extracellular segment spans residues 1–30 (MDYQVSSPTYDIDYYTSEPCQKINVKQIAA). Tyr3 is modified (sulfotyrosine). O-linked (GalNAc...) serine glycans are attached at residues Ser6 and Ser7. A sulfotyrosine mark is found at Tyr10, Tyr14, and Tyr15. 2 disulfides stabilise this stretch: Cys20-Cys269 and Cys101-Cys178. Residues 31–58 (RLLPPLYSLVFIFGFVGNILVVLILINC) traverse the membrane as a helical segment. Residues 59-68 (KRLKSMTDIY) are Cytoplasmic-facing. The helical transmembrane segment at 69–89 (LLNLAISDLLFLLTVPFWAHY) threads the bilayer. The Extracellular segment spans residues 90 to 102 (AAAQWDFGNTMCQ). A helical transmembrane segment spans residues 103-124 (LLTGLYFIGFFSGIFFIILLTI). Residues 125 to 141 (DRYLAIVHAVFALKART) are Cytoplasmic-facing. A helical transmembrane segment spans residues 142 to 166 (VTFGVVTSVITWVVAVFASLPGIIF). The Extracellular segment spans residues 167-198 (TRSQREGLHYTCSSHFPYSQYQFWKNFQTLKM). Residues 199–218 (VILGLVLPLLVMVICYSGIL) form a helical membrane-spanning segment. The Cytoplasmic segment spans residues 219-235 (KTLLRCRNEKKRHRAVR). A helical transmembrane segment spans residues 236–260 (LIFTIMIVYFLFWAPYNIVLLLNTF). Residues 261–277 (QEFFGLNNCSSSNRLDQ) are Extracellular-facing. Residues 278 to 301 (AMQVTETLGMTHCCINPIIYAFVG) form a helical membrane-spanning segment. At 302-352 (EKFRNYLLVFFQKHIAKRFCKCCSIFQQEAPERASSVYTRSTAEQEISVGL) the chain is on the cytoplasmic side. S-palmitoyl cysteine attachment occurs at residues Cys321, Cys323, and Cys324. Ser336, Ser337, Ser342, and Ser349 each carry phosphoserine; by BARK1.

It belongs to the G-protein coupled receptor 1 family. As to quaternary structure, interacts with PRAF2. Efficient ligand binding to CCL3/MIP-1alpha and CCL4/MIP-1beta requires sulfation, O-glycosylation and sialic acid modifications. Glycosylation on Ser-6 is required for efficient binding of CCL4. Interacts with GRK2. Interacts with ARRB1 and ARRB2. Interacts with CNIH4. Interacts with S100A4; this interaction stimulates T-lymphocyte chemotaxis. Post-translationally, sulfated on at least 2 of the N-terminal tyrosines. Sulfation is required for efficient binding of the chemokines, CCL3 and CCL4. In terms of processing, palmitoylation in the C-terminal is important for cell surface expression. Phosphorylation on serine residues in the C-terminal is stimulated by binding CC chemokines especially by APO-RANTES. Post-translationally, O-glycosylated, but not N-glycosylated. Ser-6 appears to be the major site even if Ser-7 may be also O-glycosylated. Also sialylated glycans present which contribute to chemokine binding. Thr-16 and Ser-17 may also be glycosylated and, if so, with small moieties such as a T-antigen.

It localises to the cell membrane. Functionally, receptor for a number of inflammatory CC-chemokines including CCL3/MIP-1-alpha, CCL4/MIP-1-beta and RANTES and subsequently transduces a signal by increasing the intracellular calcium ion level. May play a role in the control of granulocytic lineage proliferation or differentiation. Participates in T-lymphocyte migration to the infection site by acting as a chemotactic receptor. The sequence is that of C-C chemokine receptor type 5 (CCR5) from Macaca arctoides (Stump-tailed macaque).